The following is a 250-amino-acid chain: Ribonuclease PH (250 aa).

Phosphate-binding positions include Arg-87 and 125 to 127; that span reads GTR.

This sequence belongs to the RNase PH family. In terms of assembly, homohexameric ring arranged as a trimer of dimers.

The catalysed reaction is tRNA(n+1) + phosphate = tRNA(n) + a ribonucleoside 5'-diphosphate. Phosphorolytic 3'-5' exoribonuclease that plays an important role in tRNA 3'-end maturation. Removes nucleotide residues following the 3'-CCA terminus of tRNAs; can also add nucleotides to the ends of RNA molecules by using nucleoside diphosphates as substrates, but this may not be physiologically important. Probably plays a role in initiation of 16S rRNA degradation (leading to ribosome degradation) during starvation. The polypeptide is Ribonuclease PH (Moorella thermoacetica (strain ATCC 39073 / JCM 9320)).